We begin with the raw amino-acid sequence, 1437 residues long: uncharacterized protein (1437 aa).

The N-terminal stretch at 1 to 25 (MRRGCRHHLAAVVLLIATFPPLAYN) is a signal peptide. Over 26-1326 (QNIGGINQNI…SRIKENYFKW (1301 aa)) the chain is Extracellular. N-linked (GlcNAc...) asparagine glycans are attached at residues Asn-103, Asn-315, Asn-364, Asn-492, Asn-605, Asn-676, and Asn-914. Residues 193–356 (AFFGQQASQA…GRYMFRVDDV (164 aa)) enclose the NIDO domain. Residues 648-829 (VKEKSREMCH…FRCQMFYWRR (182 aa)) enclose the AMOP domain. A helical transmembrane segment spans residues 1327-1347 (LAVIAGIVGIIIVILLIFLVF). Residues 1348 to 1437 (WCIKRKKLQE…QGMLGLNTSV (90 aa)) are Cytoplasmic-facing. The segment at 1394-1419 (PRTVAMPPPRGTTATPMTLEPRGFSP) is disordered.

Its subcellular location is the membrane. This is an uncharacterized protein from Caenorhabditis elegans.